The sequence spans 2368 residues: Voltage-dependent P/Q-type calcium channel subunit alpha-1A (2368 aa).

Topologically, residues 1–100 are cytoplasmic; that stretch reads MARFGDEMPG…KYAKKITEWP (100 aa). The stretch at 65–365 is one I repeat; that stretch reads NPIPVRQNCL…LVLGVLSGEF (301 aa). Residues 101 to 119 form a helical membrane-spanning segment; the sequence is PFEYMILATIIANCIVLAL. Residues 120–138 are Extracellular-facing; it reads EQHLPDDDKTPMSERLDDT. The helical transmembrane segment at 139–156 threads the bilayer; the sequence is EPYFIGIFCFEAGIKIVA. At 157–168 the chain is on the cytoplasmic side; sequence LGFAFHKGSYLR. The chain crosses the membrane as a helical span at residues 169–184; that stretch reads NGWNVMDFVVVLTGIL. The Extracellular segment spans residues 185–192; that stretch reads ATVGTEFD. Residues 193–211 form a helical membrane-spanning segment; that stretch reads LRTLRAVRVLRPLKLVSGI. Residues 212–230 are Cytoplasmic-facing; sequence PSLQVVLKSIMKAMIPLLQ. The helical transmembrane segment at 231–250 threads the bilayer; the sequence is IGLLLFFAILIFAIIGLEFY. Residues 251-337 are Extracellular-facing; that stretch reads MGKFHTTCFE…NSNDASGNTW (87 aa). N285 carries an N-linked (GlcNAc...) asparagine glycan. E320 contacts Ca(2+). A helical transmembrane segment spans residues 338–362; it reads NWLYFIPLIIIGSFFMLNLVLGVLS. The Cytoplasmic portion of the chain corresponds to 363-489; sequence GEFAKERERV…FYIRRMVKTQ (127 aa). The tract at residues 385-402 is binding to the beta subunit; sequence QQIERELNGYMEWISKAE. Position 411 is a phosphothreonine (T411). Phosphoserine is present on residues S450 and S453. Residues 475–719 form an II repeat; that stretch reads ERRMRFYIRR…VFLAIAVDNL (245 aa). A helical membrane pass occupies residues 490-509; it reads AFYWTVLSLVALNTLCVAIV. Topologically, residues 510–523 are extracellular; it reads HYNQPEWLSDFLYY. The helical transmembrane segment at 524 to 543 threads the bilayer; sequence AEFIFLGLFMSEMFIKMYGL. Residues 544 to 551 lie on the Cytoplasmic side of the membrane; sequence GTRPYFHS. Residues 552-570 form a helical membrane-spanning segment; it reads SFNCFDCGVIIGSIFEVIW. The Extracellular segment spans residues 571-580; the sequence is AVIKPGTSFG. A helical transmembrane segment spans residues 581 to 599; sequence ISVLRALRLLRIFKVTKYW. Over 600-618 the chain is Cytoplasmic; it reads ASLRNLVVSLLNSMKSIIS. A helical transmembrane segment spans residues 619–638; it reads LLFLLFLFIVVFALLGMQLF. Over 639-691 the chain is Extracellular; it reads GGQFNFDEGTPPTNFDTFPAAIMTVFQILTGEDWNEVMYDGIKSQGGVQGGMV. E670 lines the Ca(2+) pocket. A helical membrane pass occupies residues 692–716; it reads FSIYFIVLTLFGNYTLLNVFLAIAV. Over 717 to 1190 the chain is Cytoplasmic; it reads DNLANAQELT…TNPLRRLCHY (474 aa). Phosphoserine is present on residues S752 and S755. The disordered stretch occupies residues 762-781; sequence AVKEQQKNQKPTKSVWEQRT. Positions 769-779 are enriched in polar residues; the sequence is NQKPTKSVWEQ. A Phosphoserine modification is found at S792. Disordered regions lie at residues 823–1117 and 1137–1170; these read PLVV…RKPE and VNKN…KPMP. Composition is skewed to basic and acidic residues over residues 850 to 862, 871 to 924, and 932 to 958; these read RPRE…DARR, APGR…EGEP, and RPGD…RAAD. Phosphoserine is present on residues S1038, S1042, and S1051. Polar residues predominate over residues 1056–1073; that stretch reads GNSTNPGPALATNPQNAA. The span at 1074–1083 shows a compositional bias: low complexity; it reads SRRTPNNPGN. The segment covering 1094–1111 has biased composition (polar residues); sequence ENSLIVTNPSSTQPNSAK. A compositionally biased stretch (acidic residues) spans 1153-1163; it reads KKEEEEADPGE. The III repeat unit spans residues 1182–1465; the sequence is NPLRRLCHYI…IFVALIIITF (284 aa). Residues 1191 to 1214 form a helical membrane-spanning segment; sequence ILNLRYFEMCILMVIAMSSIALAA. Residues 1215-1231 are Extracellular-facing; the sequence is EDPVQPNAPRNNVLRYF. The helical transmembrane segment at 1232 to 1251 threads the bilayer; sequence DYVFTGVFTFEMVIKMIDLG. The Cytoplasmic segment spans residues 1252–1258; the sequence is LVLHQGA. The chain crosses the membrane as a helical span at residues 1259 to 1282; sequence YFRDLWNILDFIVVSGALVAFAFT. Topologically, residues 1283–1293 are extracellular; sequence GNSKGKDINTI. The helical transmembrane segment at 1294–1311 threads the bilayer; sequence KSLRVLRVLRPLKTIKRL. Over 1312–1330 the chain is Cytoplasmic; that stretch reads PKLKAVFDCVVNSLKNVFN. A helical membrane pass occupies residues 1331 to 1350; it reads ILIVYMLFMFIFAVVAVQLF. Residues 1351–1437 lie on the Extracellular side of the membrane; it reads KGKFFHCTDE…QGPSPGYRME (87 aa). E1411 contributes to the Ca(2+) binding site. A helical membrane pass occupies residues 1438-1462; sequence MSIFYVVYFVVFPFFFVNIFVALII. Residues 1463–1518 are Cytoplasmic-facing; sequence ITFQEQGDKMMEEYSLEKNERACIDFAISAKPLTRHMPQNKQSFQYRMWQFVVSPP. An IV repeat occupies 1502–1765; it reads NKQSFQYRMW…LFVAVIMDNF (264 aa). Residues 1519 to 1537 form a helical membrane-spanning segment; it reads FEYTIMAMIALNTIVLMMK. Over 1538–1551 the chain is Extracellular; sequence FYGASVAYENALRV. Residues 1552-1573 traverse the membrane as a helical segment; sequence FNIVFTSLFSLECVLKVMAFGI. The Cytoplasmic segment spans residues 1574–1580; it reads LNYFRDA. The chain crosses the membrane as a helical span at residues 1581-1600; it reads WNIFDFVTVLGSITDILVTE. Over 1601–1607 the chain is Extracellular; it reads FGNNFIN. N-linked (GlcNAc...) asparagine glycosylation is present at N1607. A helical transmembrane segment spans residues 1608 to 1626; sequence LSFLRLFRAARLIKLLRQG. Residues 1627–1645 are Cytoplasmic-facing; the sequence is YTIRILLWTFVQSFKALPY. Residues 1646-1665 traverse the membrane as a helical segment; sequence VCLLIAMLFFIYAIIGMQVF. Residues 1666–1737 lie on the Extracellular side of the membrane; that stretch reads GNIGIDGEDE…ILTADCGNEF (72 aa). Residues 1738 to 1763 traverse the membrane as a helical segment; it reads AYFYFVSFIFLCSFLMLNLFVAVIMD. At 1764-2368 the chain is on the cytoplasmic side; that stretch reads NFEYLTRDSS…AYSESEDDWC (605 aa). At T1935 the chain carries Phosphothreonine. The segment at 1940 to 2368 is disordered; it reads QRMEPPSPTQ…AYSESEDDWC (429 aa). 2 stretches are compositionally biased toward polar residues: residues 1948–1963 and 1981–1997; these read TQEG…STQL and SWVT…TGTW. 6 positions are modified to phosphoserine: S1998, S2016, S2028, S2030, S2071, and S2091. Residues 2008–2017 show a composition bias toward polar residues; sequence PNSQPNSQSV. The span at 2018–2034 shows a compositional bias: basic and acidic residues; it reads EMREMGTDGYSDSEHYL. The span at 2063 to 2073 shows a compositional bias: polar residues; the sequence is DLSTISDTSPM. Basic and acidic residues-rich tracts occupy residues 2085 to 2102 and 2143 to 2153; these read RRLD…ENQR and PSKDRDQDRGR. The segment covering 2154 to 2172 has biased composition (basic residues); it reads PKDRKHRPHHHHHHHHHHP. Basic and acidic residues predominate over residues 2173–2209; that stretch reads PAPDRDRYAQERPDTGRARAREQRWSRSPSEGREHTT. Residues 2213–2231 show a composition bias toward low complexity; the sequence is GSSSVSGSPAPSTSGTSTP. Residues 2289-2305 show a composition bias toward basic and acidic residues; sequence EGPRPRGADYTEPDSPR.

This sequence belongs to the calcium channel alpha-1 subunit (TC 1.A.1.11) family. CACNA1A subfamily. As to quaternary structure, voltage-dependent calcium channels are multisubunit complexes, consisting of alpha-1, alpha-2, beta and delta subunits in a 1:1:1:1 ratio. The channel activity is directed by the pore-forming and voltage-sensitive alpha-1 subunit. In many cases, this subunit is sufficient to generate voltage-sensitive calcium channel activity. The auxiliary subunits beta and alpha-2/delta linked by a disulfide bridge regulate the channel activity. Interacts with CABP1. Interacts with the spider omega-agatoxin-IVA (AC P30288). Interacts with TSPOAP1. As to expression, brain specific; mainly found in the cerebellum, olfactory bulb, cerebral cortex, hippocampus, and inferior colliculus. In the hippocampus, expression occurs in pyramidal and granule neurons, as well as in interneurons. Purkinje cells contain predominantly P-type VSCC, the Q-type being a prominent calcium current in cerebellar granule cells.

It localises to the cell membrane. It carries out the reaction Ca(2+)(in) = Ca(2+)(out). In terms of biological role, voltage-sensitive calcium channels (VSCC) mediate the entry of calcium ions into excitable cells and are also involved in a variety of calcium-dependent processes, including muscle contraction, hormone or neurotransmitter release, gene expression, cell motility, cell division and cell death. The isoform alpha-1A gives rise to P and/or Q-type calcium currents. P/Q-type calcium channels belong to the 'high-voltage activated' (HVA) group and are specifically blocked by the spider omega-agatoxin-IVA (AC P54282). They are however insensitive to dihydropyridines (DHP). The chain is Voltage-dependent P/Q-type calcium channel subunit alpha-1A from Mus musculus (Mouse).